The sequence spans 100 residues: NADH-quinone oxidoreductase subunit K (100 aa).

3 helical membrane passes run 2–22 (ITLS…LIGI), 29–49 (IMLF…LAAI), and 63–83 (LFIV…LILW).

The protein belongs to the complex I subunit 4L family. As to quaternary structure, NDH-1 is composed of 14 different subunits. Subunits NuoA, H, J, K, L, M, N constitute the membrane sector of the complex.

The protein resides in the cell inner membrane. The enzyme catalyses a quinone + NADH + 5 H(+)(in) = a quinol + NAD(+) + 4 H(+)(out). In terms of biological role, NDH-1 shuttles electrons from NADH, via FMN and iron-sulfur (Fe-S) centers, to quinones in the respiratory chain. The immediate electron acceptor for the enzyme in this species is believed to be ubiquinone. Couples the redox reaction to proton translocation (for every two electrons transferred, four hydrogen ions are translocated across the cytoplasmic membrane), and thus conserves the redox energy in a proton gradient. The protein is NADH-quinone oxidoreductase subunit K of Campylobacter curvus (strain 525.92).